The following is a 221-amino-acid chain: Small ribosomal subunit protein uS3 (221 aa).

Residues 39–107 enclose the KH type-2 domain; it reads IREYIKRKLY…QVHVNIVEVK (69 aa).

The protein belongs to the universal ribosomal protein uS3 family. In terms of assembly, part of the 30S ribosomal subunit. Forms a tight complex with proteins S10 and S14.

Its function is as follows. Binds the lower part of the 30S subunit head. Binds mRNA in the 70S ribosome, positioning it for translation. In Desulforamulus reducens (strain ATCC BAA-1160 / DSM 100696 / MI-1) (Desulfotomaculum reducens), this protein is Small ribosomal subunit protein uS3.